A 194-amino-acid chain; its full sequence is Peptidyl-tRNA hydrolase (194 aa).

Residue Tyr-16 coordinates tRNA. The active-site Proton acceptor is the His-21. 3 residues coordinate tRNA: Phe-67, Asn-69, and Asn-115.

It belongs to the PTH family. In terms of assembly, monomer.

The protein resides in the cytoplasm. The catalysed reaction is an N-acyl-L-alpha-aminoacyl-tRNA + H2O = an N-acyl-L-amino acid + a tRNA + H(+). Hydrolyzes ribosome-free peptidyl-tRNAs (with 1 or more amino acids incorporated), which drop off the ribosome during protein synthesis, or as a result of ribosome stalling. In terms of biological role, catalyzes the release of premature peptidyl moieties from peptidyl-tRNA molecules trapped in stalled 50S ribosomal subunits, and thus maintains levels of free tRNAs and 50S ribosomes. The sequence is that of Peptidyl-tRNA hydrolase from Salmonella heidelberg (strain SL476).